The chain runs to 736 residues: RNA-binding protein RMD9-like, mitochondrial (736 aa).

Disordered stretches follow at residues 1 to 28 (MFRF…KTNS), 124 to 148 (PRRS…HPNT), and 566 to 618 (NRGI…GTPV). Residues 1–79 (MFRFAQPANV…HFKNQFSSRN (79 aa)) constitute a mitochondrion transit peptide. Residues 125-140 (RRSNMRNNGNNNMNNG) are compositionally biased toward low complexity. Over residues 566-578 (NRGISSSSPMSAV) the composition is skewed to polar residues. Low complexity predominate over residues 579 to 596 (NSLAPSTTNTPSPSLSPI). The segment covering 602-613 (LSSARNTPNKIW) has biased composition (polar residues).

Belongs to the RMD9 family. As to quaternary structure, monomer. Post-translationally, phosphorylated. Phosphorylation promotes binding to RNA.

It localises to the mitochondrion inner membrane. Functionally, may be involved in the processing or stability of mitochondrial mRNAs. This Candida glabrata (strain ATCC 2001 / BCRC 20586 / JCM 3761 / NBRC 0622 / NRRL Y-65 / CBS 138) (Yeast) protein is RNA-binding protein RMD9-like, mitochondrial.